The primary structure comprises 357 residues: Solute carrier family 25 member 3 (357 aa).

Residues 1 to 45 (MFSSVAHLARANPFNAPHLQLVHDGLSGPRSPPAPPRRSRHLAAA) constitute a mitochondrion transit peptide. The Mitochondrial intermembrane segment spans residues 46–58 (AVEEYSCEFGSMK). Solcar repeat units lie at residues 58 to 142 (KYYA…FKAL), 155 to 239 (WRTS…TVEA), and 256 to 334 (EQLV…VKVY). A helical membrane pass occupies residues 59–81 (YYALCGFGGVLSCGLTHTAVVPL). The Mitochondrial matrix portion of the chain corresponds to 82 to 116 (DLVKCRMQVDPQKYKGIFNGFSITLKEDGVRGLAK). Position 94 is an N6-acetyllysine (K94). The residue at position 107 (K107) is an N6-methyllysine. A helical transmembrane segment spans residues 117 to 136 (GWAPTLIGYSMQGLCKFGFY). Residues 137-156 (EVFKALYSNILGEENTYLWR) lie on the Mitochondrial intermembrane side of the membrane. A helical membrane pass occupies residues 157-178 (TSLYLASSASAEFFADIALAPM). Residues 179–213 (EAAKVRIQTQPGYANTLREAVPKMYKEEGLNAFYK) lie on the Mitochondrial matrix side of the membrane. The residue at position 191 (Y191) is a Phosphotyrosine. Position 204 is an N6-acetyllysine (K204). Residues 214 to 233 (GVAPLWMRQIPYTMMKFACF) traverse the membrane as a helical segment. Residues 234-256 (ERTVEALYKFVVPKPRSECTKAE) lie on the Mitochondrial intermembrane side of the membrane. A helical membrane pass occupies residues 257–279 (QLVVTFVAGYIAGVFCAIVSHPA). Residues 280–309 (DSVVSVLNKEKGSTASQVLQRLGFRGVWKG) are Mitochondrial matrix-facing. A helical transmembrane segment spans residues 310–328 (LFARIIMIGTLTALQWFIY). Topologically, residues 329–357 (DSVKVYFRLPRPPPPEMPESLKKKLGLTE) are mitochondrial intermembrane.

This sequence belongs to the mitochondrial carrier (TC 2.A.29) family. In terms of assembly, interacts with PPIF; the interaction is impaired by CsA.

Its subcellular location is the mitochondrion inner membrane. The catalysed reaction is phosphate(in) + H(+)(in) = phosphate(out) + H(+)(out). In terms of biological role, inorganic ion transporter that transports phosphate or copper ions across the mitochondrial inner membrane into the matrix compartment. Mediates proton-coupled symport of phosphate ions necessary for mitochondrial oxidative phosphorylation of ADP to ATP. Transports copper ions probably in the form of anionic copper(I) complexes to maintain mitochondrial matrix copper pool and to supply copper for cytochrome C oxidase complex assembly. May also play a role in regulation of the mitochondrial permeability transition pore (mPTP). This is Solute carrier family 25 member 3 from Mus musculus (Mouse).